We begin with the raw amino-acid sequence, 65 residues long: Large ribosomal subunit protein bL35 (65 aa).

It belongs to the bacterial ribosomal protein bL35 family.

In Rhodospirillum rubrum (strain ATCC 11170 / ATH 1.1.1 / DSM 467 / LMG 4362 / NCIMB 8255 / S1), this protein is Large ribosomal subunit protein bL35.